Here is a 465-residue protein sequence, read N- to C-terminus: Methionine aminopeptidase 2-2 (465 aa).

Basic and acidic residues predominate over residues 1–13; the sequence is MGSKTPNDHRRGP. Residues 1–92 form a disordered region; the sequence is MGSKTPNDHR…KKKTLLGGLQ (92 aa). The span at 44-55 shows a compositional bias: acidic residues; that stretch reads GETEDGEDEDDD. Basic residues predominate over residues 71–86; it reads TKKKNKRKKNKKKKKT. His217 lines the substrate pocket. Asp238, Asp249, and His318 together coordinate a divalent metal cation. His326 lines the substrate pocket. A divalent metal cation contacts are provided by Glu351 and Glu446.

This sequence belongs to the peptidase M24A family. Methionine aminopeptidase eukaryotic type 2 subfamily. It depends on Co(2+) as a cofactor. Zn(2+) serves as cofactor. Mn(2+) is required as a cofactor. Requires Fe(2+) as cofactor.

The protein localises to the cytoplasm. The catalysed reaction is Release of N-terminal amino acids, preferentially methionine, from peptides and arylamides.. Its function is as follows. Cotranslationally removes the N-terminal methionine from nascent proteins. The N-terminal methionine is often cleaved when the second residue in the primary sequence is small and uncharged (Met-Ala-, Cys, Gly, Pro, Ser, Thr, or Val). The sequence is that of Methionine aminopeptidase 2-2 from Blastomyces gilchristii (strain SLH14081) (Blastomyces dermatitidis).